Consider the following 107-residue polypeptide: Large ribosomal subunit protein bL21c (107 aa).

It belongs to the bacterial ribosomal protein bL21 family. As to quaternary structure, part of the 50S ribosomal subunit.

It localises to the plastid. It is found in the chloroplast. Functionally, this protein binds to 23S rRNA. The chain is Large ribosomal subunit protein bL21c from Cyanidioschyzon merolae (strain NIES-3377 / 10D) (Unicellular red alga).